Reading from the N-terminus, the 375-residue chain is Serine protease 23 (375 aa).

The first 23 residues, 1–23, serve as a signal peptide directing secretion; sequence MAGTPGHPIFLLLLLRAIGQVSP. Asparagine 93 carries an N-linked (GlcNAc...) asparagine glycan. A disulfide bridge connects residues cysteine 153 and cysteine 169. Histidine 168 (charge relay system) is an active-site residue. The N-linked (GlcNAc...) asparagine glycan is linked to asparagine 199. Active-site charge relay system residues include aspartate 232 and serine 308.

Belongs to the peptidase S1 family.

Its subcellular location is the secreted. This chain is Serine protease 23 (PRSS23), found in Bos taurus (Bovine).